A 142-amino-acid polypeptide reads, in one-letter code: Hemoglobin subunit alpha (142 aa).

The Globin domain occupies 2-142; that stretch reads VLSAADKTNV…VSTVLTSKYR (141 aa). The residue at position 4 (serine 4) is a Phosphoserine. Lysine 8 carries the N6-succinyllysine modification. Phosphothreonine is present on threonine 9. Lysine 12 carries the N6-succinyllysine modification. Position 17 is an N6-acetyllysine; alternate (lysine 17). Lysine 17 is subject to N6-succinyllysine; alternate. Lysine 41 is modified (N6-succinyllysine). Serine 50 is subject to Phosphoserine. Histidine 59 contributes to the O2 binding site. Histidine 88 provides a ligand contact to heme b. A Phosphoserine modification is found at serine 103. Threonine 109 carries the phosphothreonine modification. Phosphoserine occurs at positions 125 and 132. Threonine 135 and threonine 138 each carry phosphothreonine. Residue serine 139 is modified to Phosphoserine.

The protein belongs to the globin family. In terms of assembly, heterotetramer of two alpha chains and two beta chains. Red blood cells.

Functionally, involved in oxygen transport from the lung to the various peripheral tissues. In terms of biological role, hemopressin acts as an antagonist peptide of the cannabinoid receptor CNR1. Hemopressin-binding efficiently blocks cannabinoid receptor CNR1 and subsequent signaling. This Equus przewalskii (Przewalski's horse) protein is Hemoglobin subunit alpha (HBA).